A 159-amino-acid polypeptide reads, in one-letter code: Ribosomal RNA large subunit methyltransferase H (159 aa).

Residues Leu76, Gly108, and 127–132 (FGKLTL) each bind S-adenosyl-L-methionine.

Belongs to the RNA methyltransferase RlmH family. In terms of assembly, homodimer.

It is found in the cytoplasm. It carries out the reaction pseudouridine(1915) in 23S rRNA + S-adenosyl-L-methionine = N(3)-methylpseudouridine(1915) in 23S rRNA + S-adenosyl-L-homocysteine + H(+). Its function is as follows. Specifically methylates the pseudouridine at position 1915 (m3Psi1915) in 23S rRNA. In Latilactobacillus sakei subsp. sakei (strain 23K) (Lactobacillus sakei subsp. sakei), this protein is Ribosomal RNA large subunit methyltransferase H.